A 242-amino-acid polypeptide reads, in one-letter code: Caffeoyl-CoA O-methyltransferase 4 (242 aa).

K16 provides a ligand contact to substrate. Residues T58, E80, 82–83 (GV), S88, D106, and A135 each bind S-adenosyl-L-methionine. D158 is a substrate binding site. D158 contributes to the a divalent metal cation binding site. S-adenosyl-L-methionine is bound at residue D160. Residues D184 and N185 each contribute to the a divalent metal cation site. N189 provides a ligand contact to substrate.

The protein belongs to the class I-like SAM-binding methyltransferase superfamily. Cation-dependent O-methyltransferase family. CCoAMT subfamily. The cofactor is Mg(2+). As to expression, mostly expressed in the bottom and middle parts of the stems.

It carries out the reaction (E)-caffeoyl-CoA + S-adenosyl-L-methionine = (E)-feruloyl-CoA + S-adenosyl-L-homocysteine + H(+). It functions in the pathway aromatic compound metabolism; phenylpropanoid biosynthesis. Its function is as follows. Methylates caffeoyl-CoA to feruloyl-CoA and 5-hydroxyferuloyl-CoA to sinapoyl-CoA. Plays a role in the synthesis of feruloylated polysaccharides. Involved in the reinforcement of the plant cell wall. Also involved in the responding to wounding or pathogen challenge by the increased formation of cell wall-bound ferulic acid polymers. The sequence is that of Caffeoyl-CoA O-methyltransferase 4 (CCOAOMT4) from Nicotiana tabacum (Common tobacco).